Here is a 263-residue protein sequence, read N- to C-terminus: Orotidine 5'-phosphate decarboxylase (263 aa).

Residues D38, 60 to 62, 91 to 100, Y213, and R232 contribute to the substrate site; these read KTH and DRKFADIGNT. Residue K93 is the Proton donor of the active site.

It belongs to the OMP decarboxylase family.

It catalyses the reaction orotidine 5'-phosphate + H(+) = UMP + CO2. It participates in pyrimidine metabolism; UMP biosynthesis via de novo pathway; UMP from orotate: step 2/2. This is Orotidine 5'-phosphate decarboxylase (PYR4) from Rhizomucor pusillus.